The chain runs to 566 residues: Proline--tRNA ligase (566 aa).

It belongs to the class-II aminoacyl-tRNA synthetase family. ProS type 1 subfamily. Homodimer.

The protein localises to the cytoplasm. The enzyme catalyses tRNA(Pro) + L-proline + ATP = L-prolyl-tRNA(Pro) + AMP + diphosphate. In terms of biological role, catalyzes the attachment of proline to tRNA(Pro) in a two-step reaction: proline is first activated by ATP to form Pro-AMP and then transferred to the acceptor end of tRNA(Pro). As ProRS can inadvertently accommodate and process non-cognate amino acids such as alanine and cysteine, to avoid such errors it has two additional distinct editing activities against alanine. One activity is designated as 'pretransfer' editing and involves the tRNA(Pro)-independent hydrolysis of activated Ala-AMP. The other activity is designated 'posttransfer' editing and involves deacylation of mischarged Ala-tRNA(Pro). The misacylated Cys-tRNA(Pro) is not edited by ProRS. The protein is Proline--tRNA ligase of Coxiella burnetii (strain RSA 493 / Nine Mile phase I).